A 334-amino-acid chain; its full sequence is S-adenosylmethionine:tRNA ribosyltransferase-isomerase (334 aa).

Belongs to the QueA family. In terms of assembly, monomer.

The protein localises to the cytoplasm. It catalyses the reaction 7-aminomethyl-7-carbaguanosine(34) in tRNA + S-adenosyl-L-methionine = epoxyqueuosine(34) in tRNA + adenine + L-methionine + 2 H(+). Its pathway is tRNA modification; tRNA-queuosine biosynthesis. Functionally, transfers and isomerizes the ribose moiety from AdoMet to the 7-aminomethyl group of 7-deazaguanine (preQ1-tRNA) to give epoxyqueuosine (oQ-tRNA). The chain is S-adenosylmethionine:tRNA ribosyltransferase-isomerase from Aquifex aeolicus (strain VF5).